Consider the following 406-residue polypeptide: Arginine deiminase (406 aa).

C396 (amidino-cysteine intermediate) is an active-site residue.

This sequence belongs to the arginine deiminase family.

The protein localises to the cytoplasm. The enzyme catalyses L-arginine + H2O = L-citrulline + NH4(+). Its pathway is amino-acid degradation; L-arginine degradation via ADI pathway; carbamoyl phosphate from L-arginine: step 1/2. This is Arginine deiminase from Vibrio campbellii (strain ATCC BAA-1116).